The sequence spans 242 residues: 3-dehydroquinate dehydratase (242 aa).

Residues 39–41 (EIR) and arginine 73 contribute to the 3-dehydroquinate site. The active-site Proton donor/acceptor is histidine 135. The active-site Schiff-base intermediate with substrate is lysine 162. 3-dehydroquinate contacts are provided by arginine 203 and glutamine 228.

This sequence belongs to the type-I 3-dehydroquinase family. In terms of assembly, homodimer.

It catalyses the reaction 3-dehydroquinate = 3-dehydroshikimate + H2O. The protein operates within metabolic intermediate biosynthesis; chorismate biosynthesis; chorismate from D-erythrose 4-phosphate and phosphoenolpyruvate: step 3/7. Functionally, involved in the third step of the chorismate pathway, which leads to the biosynthesis of aromatic amino acids. Catalyzes the cis-dehydration of 3-dehydroquinate (DHQ) and introduces the first double bond of the aromatic ring to yield 3-dehydroshikimate. The protein is 3-dehydroquinate dehydratase of Methanosarcina barkeri (strain Fusaro / DSM 804).